The following is a 128-amino-acid chain: Probable 4-amino-4-deoxy-L-arabinose-phosphoundecaprenol flippase subunit ArnF (128 aa).

Residues methionine 1–cysteine 2 are Cytoplasmic-facing. Residues leucine 3 to alanine 23 form a helical membrane-spanning segment. The Periplasmic segment spans residues alanine 24 to aspartate 35. The chain crosses the membrane as a helical span at residues phenylalanine 36–glycine 56. The Cytoplasmic segment spans residues tyrosine 57–alanine 76. A helical membrane pass occupies residues tyrosine 77–tryptophan 97. The Periplasmic portion of the chain corresponds to glutamate 98–threonine 100. Residues phenylalanine 101 to leucine 121 traverse the membrane as a helical segment. At proline 122–tyrosine 128 the chain is on the cytoplasmic side.

Belongs to the ArnF family. Heterodimer of ArnE and ArnF.

The protein resides in the cell inner membrane. The protein operates within bacterial outer membrane biogenesis; lipopolysaccharide biosynthesis. Translocates 4-amino-4-deoxy-L-arabinose-phosphoundecaprenol (alpha-L-Ara4N-phosphoundecaprenol) from the cytoplasmic to the periplasmic side of the inner membrane. The polypeptide is Probable 4-amino-4-deoxy-L-arabinose-phosphoundecaprenol flippase subunit ArnF (Shigella flexneri).